The following is a 494-amino-acid chain: MAKTLTASQAAKEHVLAVSRDFISQPRLIYKTVSGVNGPLVILDDVKFPKFSEIVQLRLADGTLRSGQVLEVSGTKAVVQVFEGTSGIDAKNTLCEFTGDILRTPVSEDMLGRVFNGSGKPIDKGPPILAEDFLDIQGQPINPWSRIYPEEMIQTGISAIDVMNSIARGQKIPIFSAAGLPHNEIAAQICRQAGLVKIPGKSVLDDHEDNFAIVFAAMGVNMETARFFKQDFEENGSMENVCLFLNLANDPTIERIITPRLALTAAEFLAYQCEKHVLVILTDMSSYAEALREVSAAREEVPGRRGFPGYMYTDLATIYERAGRVEGRNGSITQIPILTMPNDDITHPIPDLTGYITEGQIYVDRQLHNRQIYPPVNVLPSLSRLMKSAIGEGMTRKDHSDVSNQLYACYAIGKDVQAMKAVVGEEALTPDDLLYLEFLTKFEKNFISQGNYENRTVFESLDIGWQLLRIFPKEMLKRIPASILAEFYPRDSRH.

Arg384 is an ATP binding site.

Belongs to the ATPase alpha/beta chains family. As to quaternary structure, V-ATPase is a heteromultimeric enzyme made up of two complexes: the ATP-hydrolytic V1 complex and the proton translocation V0 complex. The V1 complex consists of three catalytic AB heterodimers that form a heterohexamer, three peripheral stalks each consisting of EG heterodimers, one central rotor including subunits D and F, and the regulatory subunits C and H. The proton translocation complex V0 consists of the proton transport subunit a, a ring of proteolipid subunits c9c'', rotary subunit d, subunits e and f, and the accessory subunits VhaAC45 and ATP6AP2.

In terms of biological role, non-catalytic subunit of the V1 complex of vacuolar(H+)-ATPase (V-ATPase), a multisubunit enzyme composed of a peripheral complex (V1) that hydrolyzes ATP and a membrane integral complex (V0) that translocates protons. V-ATPase is responsible for acidifying and maintaining the pH of intracellular compartments and in some cell types, is targeted to the plasma membrane, where it is responsible for acidifying the extracellular environment. Essential for the proper assembly and activity of V-ATPase. This is V-type proton ATPase subunit B (VHA55) from Heliothis virescens (Tobacco budworm moth).